The following is a 155-amino-acid chain: UPF0303 protein lp_3613 (155 aa).

It belongs to the UPF0303 family.

This is UPF0303 protein lp_3613 from Lactiplantibacillus plantarum (strain ATCC BAA-793 / NCIMB 8826 / WCFS1) (Lactobacillus plantarum).